Here is a 416-residue protein sequence, read N- to C-terminus: STAM-binding protein-like (416 aa).

Residues 214–244 are disordered; it reads SYGTVQPHPPAVDRSLKPSSYGSNSSGVTSD. The span at 230-243 shows a compositional bias: low complexity; the sequence is KPSSYGSNSSGVTS. The region spanning 249–380 is the MPN domain; the sequence is VKIPRDVCCK…LTDYGMKEIG (132 aa). Zn(2+) is bound by residues His-327, His-329, Asp-340, His-342, Cys-382, His-388, and His-390. Residues 327-340 carry the JAMM motif motif; the sequence is HTHPTQTAFLSSVD.

This sequence belongs to the peptidase M67C family. It depends on Zn(2+) as a cofactor.

In terms of biological role, zinc metalloprotease that specifically cleaves 'Lys-63'-linked polyubiquitin chains. Does not cleave 'Lys-48'-linked polyubiquitin chains. Functions at the endosome and is able to oppose the ubiquitin-dependent sorting of receptors to lysosomes. This chain is STAM-binding protein-like (stambp), found in Xenopus laevis (African clawed frog).